Here is a 179-residue protein sequence, read N- to C-terminus: Hypoxanthine phosphoribosyltransferase (179 aa).

Diphosphate is bound by residues Arg45 and Gly46. Glu101 lines the GMP pocket. Glu101 contributes to the IMP binding site. Mg(2+) is bound by residues Glu101 and Asp102. Asp105 functions as the Proton acceptor in the catalytic mechanism. Residues 105 to 110, Lys133, and Asp161 contribute to the GMP site; that span reads DTGYTL. IMP contacts are provided by residues 105–110 and Lys133; that span reads DTGYTL. Arg167 contacts diphosphate.

This sequence belongs to the purine/pyrimidine phosphoribosyltransferase family. In terms of assembly, homotetramer. Requires Mg(2+) as cofactor.

It localises to the cytoplasm. The catalysed reaction is IMP + diphosphate = hypoxanthine + 5-phospho-alpha-D-ribose 1-diphosphate. The enzyme catalyses GMP + diphosphate = guanine + 5-phospho-alpha-D-ribose 1-diphosphate. Its pathway is purine metabolism; IMP biosynthesis via salvage pathway; IMP from hypoxanthine: step 1/1. In terms of biological role, purine salvage pathway enzyme which catalyzes the transfer of the ribosyl-5-phosphate group from 5-phospho-alpha-D-ribose 1-diphosphate (PRPP) to the N9 position of hypoxanthine to yield IMP (inosine 5'-monophosphate). To a lesser extent, can also act on guanine leading to GMP, but shows a highly less efficient activity with xanthine. The chain is Hypoxanthine phosphoribosyltransferase (hpt) from Haemophilus influenzae (strain ATCC 51907 / DSM 11121 / KW20 / Rd).